A 911-amino-acid chain; its full sequence is Golgin IMH1 (911 aa).

Disordered regions lie at residues 16–41 (LAKGLADDMSPTPSEQQIEDDKSGLP) and 271–314 (KELP…ETVD). Positions 101–280 (FFQDLNNKNN…KELPKAISHQ (180 aa)) form a coiled coil. A compositionally biased stretch (basic residues) spans 286–299 (NRRKKNRNKGKKNK). 2 positions are modified to phosphoserine: Ser308 and Ser660. Coiled-coil stretches lie at residues 312-735 (TVDN…ALKH) and 766-814 (SKAD…KERQ). The interval 814–850 (QYSDKSGRVSRSGSIGTLANANIDSSPANNSNPTKLE) is disordered. A compositionally biased stretch (polar residues) spans 822–847 (VSRSGSIGTLANANIDSSPANNSNPT). Position 827 is a phosphoserine (Ser827). The residue at position 830 (Thr830) is a Phosphothreonine. The GRIP domain maps to 861 to 909 (DSEKNEKIAYIKNVLLGFLEHKEQRNQLLPVISMLLQLDSTDEKRLVMS).

Forms oligomers and is present in high-molecular-mass complexes. Interacts with ARL1.

The protein resides in the cytoplasm. Its subcellular location is the golgi apparatus membrane. Functionally, involved in vesicular transport between an endosomal compartment and the Golgi apparatus. This chain is Golgin IMH1 (IMH1), found in Saccharomyces cerevisiae (strain ATCC 204508 / S288c) (Baker's yeast).